Here is a 550-residue protein sequence, read N- to C-terminus: Endonuclease/exonuclease/phosphatase family domain-containing protein 1 (550 aa).

A HhH domain is found at Glu39–Tyr68. Over residues Ser194–Ser213 the composition is skewed to polar residues. The interval Ser194–Pro216 is disordered.

The protein is Endonuclease/exonuclease/phosphatase family domain-containing protein 1 (eepd1) of Danio rerio (Zebrafish).